The chain runs to 378 residues: Chaperone protein DnaJ (378 aa).

The region spanning 4 to 68 (DFYEILGVSR…ETRARYDRFG (65 aa)) is the J domain. A CR-type zinc finger spans residues 136 to 218 (GGEKEIRIPH…CGGAGRKQET (83 aa)). 8 residues coordinate Zn(2+): Cys-149, Cys-152, Cys-166, Cys-169, Cys-192, Cys-195, Cys-206, and Cys-209. 4 CXXCXGXG motif repeats span residues 149 to 156 (CKTCSGSG), 166 to 173 (CGTCNGTG), 192 to 199 (CPTCNGEG), and 206 to 213 (CESCGGAG).

Belongs to the DnaJ family. In terms of assembly, homodimer. It depends on Zn(2+) as a cofactor.

It localises to the cytoplasm. Participates actively in the response to hyperosmotic and heat shock by preventing the aggregation of stress-denatured proteins and by disaggregating proteins, also in an autonomous, DnaK-independent fashion. Unfolded proteins bind initially to DnaJ; upon interaction with the DnaJ-bound protein, DnaK hydrolyzes its bound ATP, resulting in the formation of a stable complex. GrpE releases ADP from DnaK; ATP binding to DnaK triggers the release of the substrate protein, thus completing the reaction cycle. Several rounds of ATP-dependent interactions between DnaJ, DnaK and GrpE are required for fully efficient folding. Also involved, together with DnaK and GrpE, in the DNA replication of plasmids through activation of initiation proteins. This Picosynechococcus sp. (strain ATCC 27264 / PCC 7002 / PR-6) (Agmenellum quadruplicatum) protein is Chaperone protein DnaJ.